The primary structure comprises 556 residues: 2-succinyl-5-enolpyruvyl-6-hydroxy-3-cyclohexene-1-carboxylate synthase (556 aa).

It belongs to the TPP enzyme family. MenD subfamily. In terms of assembly, homodimer. Mg(2+) serves as cofactor. It depends on Mn(2+) as a cofactor. Requires thiamine diphosphate as cofactor.

It carries out the reaction isochorismate + 2-oxoglutarate + H(+) = 5-enolpyruvoyl-6-hydroxy-2-succinyl-cyclohex-3-ene-1-carboxylate + CO2. The protein operates within quinol/quinone metabolism; 1,4-dihydroxy-2-naphthoate biosynthesis; 1,4-dihydroxy-2-naphthoate from chorismate: step 2/7. It functions in the pathway quinol/quinone metabolism; menaquinone biosynthesis. Its function is as follows. Catalyzes the thiamine diphosphate-dependent decarboxylation of 2-oxoglutarate and the subsequent addition of the resulting succinic semialdehyde-thiamine pyrophosphate anion to isochorismate to yield 2-succinyl-5-enolpyruvyl-6-hydroxy-3-cyclohexene-1-carboxylate (SEPHCHC). This Saccharopolyspora erythraea (strain ATCC 11635 / DSM 40517 / JCM 4748 / NBRC 13426 / NCIMB 8594 / NRRL 2338) protein is 2-succinyl-5-enolpyruvyl-6-hydroxy-3-cyclohexene-1-carboxylate synthase.